We begin with the raw amino-acid sequence, 482 residues long: MEVCYQLPVLPLDRPVPQHVLSRRGAISFSSSSALFGCPNPRQLSQRRGAISYDSSDQTALYIRMLGDVRVRSRAGFESERRGSHPYIDFRIFHSQSEIEVSVSARNIRRLLSFQRYLRSSRFFRGTAVSNSLNILDDDYNGQAKCMLEKVGNWNFDIFLFDRLTNGNSLVSLTFHLFSLHGLIEYFHLDMMKLRRFLVMIQEDYHSQNPYHNAVHAADVTQAMHCYLKEPKLANSVTPWDILLSLIAAATHDLDHPGVNQPFLIKTNHYLATLYKNTSVLENHHWRSAVGLLRESGLFSHLPLESRQQMETQIGALILATDISRQNEYLSLFRSHLDRGDLCLEDTRHRHLVLQMALKCADICNPCRTWELSKQWSEKVTEEFFHQGDIEKKYHLGVSPLCDRHTESIANIQIGFMTYLVEPLFTEWARFSNTRLSQTMLGHVGLNKASWKGLQREQSSSEDTDAAFELNSQLLPQENRLS.

At serine 84 the chain carries Phosphoserine. A PDEase domain is found at 136-458 (LDDDYNGQAK…ASWKGLQREQ (323 aa)). The active-site Proton donor is the histidine 212. Residues histidine 216, histidine 252, aspartate 253, and aspartate 362 each coordinate a divalent metal cation.

This sequence belongs to the cyclic nucleotide phosphodiesterase family. PDE7 subfamily. Interacts with CBFA2T3. A divalent metal cation serves as cofactor. In terms of tissue distribution, found at high levels in skeletal muscle and at low levels in a variety of tissues including brain and heart. It is expressed as well in two T-cell lines. As to expression, found abundantly in skeletal muscle and at low levels in heart.

The protein resides in the cytoplasm. It localises to the cytosol. The catalysed reaction is 3',5'-cyclic AMP + H2O = AMP + H(+). It participates in purine metabolism; 3',5'-cyclic AMP degradation; AMP from 3',5'-cyclic AMP: step 1/1. Its activity is regulated as follows. Insensitive to all selective PDE inhibitors. Hydrolyzes the second messenger cAMP, which is a key regulator of many important physiological processes. May have a role in muscle signal transduction. The protein is High affinity 3',5'-cyclic-AMP phosphodiesterase 7A of Homo sapiens (Human).